Here is a 318-residue protein sequence, read N- to C-terminus: Geranylfarnesyl diphosphate synthase (318 aa).

Isopentenyl diphosphate-binding residues include Lys-31, Arg-34, and His-65. Mg(2+)-binding residues include Asp-72 and Asp-76. An all-trans-polyprenyl diphosphate is bound at residue Arg-81. Arg-82 lines the isopentenyl diphosphate pocket. An all-trans-polyprenyl diphosphate is bound by residues Lys-166, Thr-167, and Gln-204.

It belongs to the FPP/GGPP synthase family. In terms of assembly, homodimer. Mg(2+) serves as cofactor.

It carries out the reaction isopentenyl diphosphate + (2E,6E,10E)-geranylgeranyl diphosphate = (2E,6E,10E,14E)-geranylfarnesyl diphosphate + diphosphate. Its function is as follows. Probably involved in biosynthesis of the precursor for C25 (sesterterpanyl chain) moiety of C25-C25 diether (2,3-di-O-sesterterpanyl-sn-glycero) membrane lipid. Catalyzes the condensation of isopentenyl pyrophosphate with the allylic pyrophosphates to yield all-trans geranylfarnesyl diphosphate (GFPP). Geranylgeranyl diphosphate (GGPP) is the preferred substrate, however methylallyl diphosphate (DMAPP), farnesyl diphosphate (FPP) and geranyl diphosphate (GPP) can also be used as allylic substrate. The protein is Geranylfarnesyl diphosphate synthase (fgs) of Aeropyrum pernix.